We begin with the raw amino-acid sequence, 447 residues long: Exodeoxyribonuclease 7 large subunit (447 aa).

The protein belongs to the XseA family. As to quaternary structure, heterooligomer composed of large and small subunits.

The protein localises to the cytoplasm. It carries out the reaction Exonucleolytic cleavage in either 5'- to 3'- or 3'- to 5'-direction to yield nucleoside 5'-phosphates.. In terms of biological role, bidirectionally degrades single-stranded DNA into large acid-insoluble oligonucleotides, which are then degraded further into small acid-soluble oligonucleotides. In Thioalkalivibrio sulfidiphilus (strain HL-EbGR7), this protein is Exodeoxyribonuclease 7 large subunit.